The primary structure comprises 646 residues: Acetyl-coenzyme A synthetase (646 aa).

Residues 189–192 (RGPK), Thr307, and Asn331 contribute to the CoA site. ATP is bound by residues 383–385 (GEP), 407–412 (DTWWQT), Asp496, and Arg511. Ser519 is a binding site for CoA. Arg522 is an ATP binding site. Mg(2+) is bound by residues Val533, His535, and Val538. Arg580 is a binding site for CoA. Position 605 is an N6-acetyllysine (Lys605).

The protein belongs to the ATP-dependent AMP-binding enzyme family. Requires Mg(2+) as cofactor. Acetylated. Deacetylation by the SIR2-homolog deacetylase activates the enzyme.

It carries out the reaction acetate + ATP + CoA = acetyl-CoA + AMP + diphosphate. In terms of biological role, catalyzes the conversion of acetate into acetyl-CoA (AcCoA), an essential intermediate at the junction of anabolic and catabolic pathways. AcsA undergoes a two-step reaction. In the first half reaction, AcsA combines acetate with ATP to form acetyl-adenylate (AcAMP) intermediate. In the second half reaction, it can then transfer the acetyl group from AcAMP to the sulfhydryl group of CoA, forming the product AcCoA. This Desulfatibacillum aliphaticivorans protein is Acetyl-coenzyme A synthetase.